Reading from the N-terminus, the 131-residue chain is Ribosome-binding factor A (131 aa).

The protein belongs to the RbfA family. As to quaternary structure, monomer. Binds 30S ribosomal subunits, but not 50S ribosomal subunits or 70S ribosomes.

It is found in the cytoplasm. Its function is as follows. One of several proteins that assist in the late maturation steps of the functional core of the 30S ribosomal subunit. Associates with free 30S ribosomal subunits (but not with 30S subunits that are part of 70S ribosomes or polysomes). Required for efficient processing of 16S rRNA. May interact with the 5'-terminal helix region of 16S rRNA. The sequence is that of Ribosome-binding factor A from Mannheimia succiniciproducens (strain KCTC 0769BP / MBEL55E).